The chain runs to 246 residues: 1-(5-phosphoribosyl)-5-[(5-phosphoribosylamino)methylideneamino] imidazole-4-carboxamide isomerase (246 aa).

Catalysis depends on Asp12, which acts as the Proton acceptor. The active-site Proton donor is the Asp134.

It belongs to the HisA/HisF family.

It is found in the cytoplasm. It catalyses the reaction 1-(5-phospho-beta-D-ribosyl)-5-[(5-phospho-beta-D-ribosylamino)methylideneamino]imidazole-4-carboxamide = 5-[(5-phospho-1-deoxy-D-ribulos-1-ylimino)methylamino]-1-(5-phospho-beta-D-ribosyl)imidazole-4-carboxamide. Its pathway is amino-acid biosynthesis; L-histidine biosynthesis; L-histidine from 5-phospho-alpha-D-ribose 1-diphosphate: step 4/9. In Psychrobacter cryohalolentis (strain ATCC BAA-1226 / DSM 17306 / VKM B-2378 / K5), this protein is 1-(5-phosphoribosyl)-5-[(5-phosphoribosylamino)methylideneamino] imidazole-4-carboxamide isomerase.